The primary structure comprises 184 residues: ATP synthase subunit b, chloroplastic (184 aa).

The chain crosses the membrane as a helical span at residues 31–53; sequence LINLSVVLGVLIYFGKGVLSNLL.

This sequence belongs to the ATPase B chain family. As to quaternary structure, F-type ATPases have 2 components, F(1) - the catalytic core - and F(0) - the membrane proton channel. F(1) has five subunits: alpha(3), beta(3), gamma(1), delta(1), epsilon(1). F(0) has four main subunits: a(1), b(1), b'(1) and c(10-14). The alpha and beta chains form an alternating ring which encloses part of the gamma chain. F(1) is attached to F(0) by a central stalk formed by the gamma and epsilon chains, while a peripheral stalk is formed by the delta, b and b' chains.

Its subcellular location is the plastid. It is found in the chloroplast thylakoid membrane. F(1)F(0) ATP synthase produces ATP from ADP in the presence of a proton or sodium gradient. F-type ATPases consist of two structural domains, F(1) containing the extramembraneous catalytic core and F(0) containing the membrane proton channel, linked together by a central stalk and a peripheral stalk. During catalysis, ATP synthesis in the catalytic domain of F(1) is coupled via a rotary mechanism of the central stalk subunits to proton translocation. Its function is as follows. Component of the F(0) channel, it forms part of the peripheral stalk, linking F(1) to F(0). This is ATP synthase subunit b, chloroplastic from Cycas taitungensis (Prince sago).